Here is a 292-residue protein sequence, read N- to C-terminus: ATP synthase subunit a (292 aa).

7 consecutive transmembrane segments (helical) span residues 39–59, 73–93, 102–122, 128–148, 172–192, 196–216, and 231–251; these read QILG…FYKL, FLLL…DLLG, YFLM…LGGI, SLTF…VMGI, TFIP…SISL, GNIL…IFIF, and VFAG…AGVL.

Belongs to the ATPase A chain family. F-type ATPases have 2 components, CF(1) - the catalytic core - and CF(0) - the membrane proton channel. CF(1) has five subunits: alpha(3), beta(3), gamma(1), delta(1), epsilon(1). CF(0) has three main subunits: a(1), b(2) and c(9-12). The alpha and beta chains form an alternating ring which encloses part of the gamma chain. CF(1) is attached to CF(0) by a central stalk formed by the gamma and epsilon chains, while a peripheral stalk is formed by the delta and b chains.

The protein resides in the cell membrane. Its function is as follows. Key component of the proton channel; it plays a direct role in the translocation of protons across the membrane. The sequence is that of ATP synthase subunit a from Mycoplasma genitalium (strain ATCC 33530 / DSM 19775 / NCTC 10195 / G37) (Mycoplasmoides genitalium).